We begin with the raw amino-acid sequence, 477 residues long: Octopamine receptor (477 aa).

Topologically, residues 1-55 are extracellular; that stretch reads MGQAATHVDANYTLINYTEEVIEDDRDACAVADDPKYPSSFGITLAVPEWEAICT. N-linked (GlcNAc...) asparagine glycosylation is found at Asn11 and Asn16. Residues 56–78 traverse the membrane as a helical segment; it reads AIVLTLIIISTIVGNILVILSVF. Residues 79-88 are Cytoplasmic-facing; that stretch reads TYKPLRIVQN. A helical membrane pass occupies residues 89-110; that stretch reads FFIVSLAVADLTVAILVLPLNV. Topologically, residues 111-127 are extracellular; the sequence is AYSILGQWVFGIYVCKM. A helical membrane pass occupies residues 128–148; sequence WLTCDIMCCTSSILNLCAIAL. Topologically, residues 149–168 are cytoplasmic; it reads DRYWAITDPINYAQKRTLER. Residues 169–191 form a helical membrane-spanning segment; it reads VLLMIGVVWVLSLIISSPPLLGW. At 192 to 216 the chain is on the extracellular side; it reads NDWPDVFEPDTPCRLTSQPGFVIFS. The helical transmembrane segment at 217–238 threads the bilayer; sequence SSGSFYIPLVIMTVVYFEIYLA. The Cytoplasmic segment spans residues 239–405; it reads TKKRLRDRAK…LTRERRAART (167 aa). Disordered regions lie at residues 256 to 317 and 334 to 358; these read SSGQ…SKDD and VTDMGENLENRNTSSESNSKETHED. 2 stretches are compositionally biased toward basic and acidic residues: residues 263 to 272 and 279 to 295; these read NNKDDHHDQD and NHNEHQGVTRLVSDNEK. Over residues 296–312 the composition is skewed to basic residues; sequence KKRTRKLTPKKKPKRKY. A helical transmembrane segment spans residues 406 to 427; sequence LGIIMGVFVVCWLPFFVIYLVI. Over 428–439 the chain is Extracellular; it reads PFCASCCLSNKF. The helical transmembrane segment at 440–460 threads the bilayer; it reads INFITWLGYCNSALNPLIYTI. Residues 461–477 are Cytoplasmic-facing; that stretch reads FNMDFRRAFKKLLCMKP.

This sequence belongs to the G-protein coupled receptor 1 family.

The protein localises to the cell membrane. In terms of biological role, receptor for octopamine. Octopamine (OA) is a neurotransmitter, neurohormone, and neuromodulator in invertebrates. The activity of this receptor is mediated by G proteins which activate adenylyl cyclase. The sequence is that of Octopamine receptor from Heliothis virescens (Tobacco budworm moth).